Consider the following 251-residue polypeptide: DNA repair protein RecO (251 aa).

The protein belongs to the RecO family.

Functionally, involved in DNA repair and RecF pathway recombination. This Streptococcus mutans serotype c (strain ATCC 700610 / UA159) protein is DNA repair protein RecO.